The primary structure comprises 185 residues: Large ribosomal subunit protein bL25 (185 aa).

The protein belongs to the bacterial ribosomal protein bL25 family. CTC subfamily. As to quaternary structure, part of the 50S ribosomal subunit; part of the 5S rRNA/L5/L18/L25 subcomplex. Contacts the 5S rRNA. Binds to the 5S rRNA independently of L5 and L18.

Functionally, this is one of the proteins that binds to the 5S RNA in the ribosome where it forms part of the central protuberance. In Chlamydia abortus (strain DSM 27085 / S26/3) (Chlamydophila abortus), this protein is Large ribosomal subunit protein bL25.